An 858-amino-acid polypeptide reads, in one-letter code: Leucine--tRNA ligase (858 aa).

The 'HIGH' region signature appears at 53 to 63 (PYPSGNLHMGH). A 'KMSKS' region motif is present at residues 622-626 (KMSKS). K625 lines the ATP pocket.

It belongs to the class-I aminoacyl-tRNA synthetase family.

The protein localises to the cytoplasm. The catalysed reaction is tRNA(Leu) + L-leucine + ATP = L-leucyl-tRNA(Leu) + AMP + diphosphate. The polypeptide is Leucine--tRNA ligase (Prochlorococcus marinus subsp. pastoris (strain CCMP1986 / NIES-2087 / MED4)).